The sequence spans 222 residues: Beta-casein (222 aa).

The first 15 residues, M1 to A15, serve as a signal peptide directing secretion. At T27 the chain carries Phosphothreonine. A phosphoserine mark is found at S30, S32, S33, and S34.

Belongs to the beta-casein family. As to expression, mammary gland specific. Secreted in milk.

The protein localises to the secreted. In terms of biological role, important role in determination of the surface properties of the casein micelles. The polypeptide is Beta-casein (CSN2) (Capra hircus (Goat)).